The following is a 686-amino-acid chain: Eomesodermin homolog (686 aa).

The disordered stretch occupies residues Gly27–Leu46. Positions Gly34–Pro43 are enriched in low complexity. A Phosphoserine modification is found at Ser107. Positions Leu276–Asp456 form a DNA-binding region, T-box. The interval Ala571–Pro686 is required for transcription activation. Positions Ala639–Pro686 are disordered. The segment covering Ser646–Ser657 has biased composition (low complexity). Positions Lys659 to Ser673 are enriched in basic and acidic residues.

In terms of tissue distribution, expressed in CD8+ T-cells.

It localises to the nucleus. Functionally, functions as a transcriptional activator playing a crucial role during development. Functions in trophoblast differentiation and later in gastrulation, regulating both mesoderm delamination and endoderm specification. Plays a role in brain development being required for the specification and the proliferation of the intermediate progenitor cells and their progeny in the cerebral cortex. Required for differentiation and migration of unipolar dendritic brush cells. Also involved in the differentiation of CD8+ T-cells during immune response regulating the expression of lytic effector genes. The polypeptide is Eomesodermin homolog (EOMES) (Homo sapiens (Human)).